Consider the following 197-residue polypeptide: MTDASISPSSPVPASTELGDVTRYLRERIRTVPDWPQLGVMFRDITPLLQDPKSLRVLVDVFVHRYMGQGLNLVAGIDARGFILGSIVAYELNLGFVPIRKKGKLPFTTVAEEYMLEYGSATVEIHADACKPGDRVLLIDDLIATGGTMMAGKRLLERLGATVVEGAAIVDLPELGGSRLLMDGGLPLFTVCRFDGH.

It belongs to the purine/pyrimidine phosphoribosyltransferase family. Homodimer.

The protein localises to the cytoplasm. It catalyses the reaction AMP + diphosphate = 5-phospho-alpha-D-ribose 1-diphosphate + adenine. The protein operates within purine metabolism; AMP biosynthesis via salvage pathway; AMP from adenine: step 1/1. In terms of biological role, catalyzes a salvage reaction resulting in the formation of AMP, that is energically less costly than de novo synthesis. In Ralstonia nicotianae (strain ATCC BAA-1114 / GMI1000) (Ralstonia solanacearum), this protein is Adenine phosphoribosyltransferase.